Here is a 212-residue protein sequence, read N- to C-terminus: Pyridoxine/pyridoxamine 5'-phosphate oxidase (212 aa).

Residues 8 to 11 and K66 each bind substrate; that span reads RTDY. Residues 61–66, 76–77, K83, and Q105 contribute to the FMN site; these read RIVLLK and FT. 3 residues coordinate substrate: Y123, R127, and S131. Residues 140–141 and W184 each bind FMN; that span reads QS. 190-192 lines the substrate pocket; the sequence is RLH. FMN is bound at residue R194.

It belongs to the pyridoxamine 5'-phosphate oxidase family. In terms of assembly, homodimer. FMN is required as a cofactor.

It catalyses the reaction pyridoxamine 5'-phosphate + O2 + H2O = pyridoxal 5'-phosphate + H2O2 + NH4(+). The enzyme catalyses pyridoxine 5'-phosphate + O2 = pyridoxal 5'-phosphate + H2O2. Its pathway is cofactor metabolism; pyridoxal 5'-phosphate salvage; pyridoxal 5'-phosphate from pyridoxamine 5'-phosphate: step 1/1. It functions in the pathway cofactor metabolism; pyridoxal 5'-phosphate salvage; pyridoxal 5'-phosphate from pyridoxine 5'-phosphate: step 1/1. Functionally, catalyzes the oxidation of either pyridoxine 5'-phosphate (PNP) or pyridoxamine 5'-phosphate (PMP) into pyridoxal 5'-phosphate (PLP). The chain is Pyridoxine/pyridoxamine 5'-phosphate oxidase from Ralstonia pickettii (strain 12J).